The primary structure comprises 296 residues: Aspartate carbamoyltransferase catalytic subunit (296 aa).

Carbamoyl phosphate-binding residues include R50 and T51. K79 provides a ligand contact to L-aspartate. Carbamoyl phosphate is bound by residues R100, H128, and Q131. L-aspartate is bound by residues R161 and R219. Carbamoyl phosphate is bound by residues L258 and P259.

The protein belongs to the aspartate/ornithine carbamoyltransferase superfamily. ATCase family. Heterooligomer of catalytic and regulatory chains.

It carries out the reaction carbamoyl phosphate + L-aspartate = N-carbamoyl-L-aspartate + phosphate + H(+). Its pathway is pyrimidine metabolism; UMP biosynthesis via de novo pathway; (S)-dihydroorotate from bicarbonate: step 2/3. Its function is as follows. Catalyzes the condensation of carbamoyl phosphate and aspartate to form carbamoyl aspartate and inorganic phosphate, the committed step in the de novo pyrimidine nucleotide biosynthesis pathway. This is Aspartate carbamoyltransferase catalytic subunit from Korarchaeum cryptofilum (strain OPF8).